Reading from the N-terminus, the 864-residue chain is Coiled-coil and C2 domain-containing protein 1B (864 aa).

Positions 82–154 are disordered; it reads QDCMTDMTGE…VNSSVAEIQH (73 aa). 2 stretches are compositionally biased toward acidic residues: residues 89 to 104 and 111 to 129; these read TGED…EELL and VGEE…EESE. Positions 91 to 118 form a coiled coil; sequence EDDDDDLEEDEELLAELQDVVGEEEEVE. The segment covering 142–154 has biased composition (polar residues); that stretch reads EQQVNSSVAEIQH. Positions 162–209 form a coiled coil; sequence GMLQVLEERIGNYKEAISNAKLSNESAKARRYERGLKTLESMLSAARQ. Positions 218–249 are disordered; it reads IPPPVACGKPAVSPTTDVPTTDTSKQGLGDLN. Over residues 229-241 the composition is skewed to low complexity; the sequence is VSPTTDVPTTDTS. Residues 385–412 adopt a coiled-coil conformation; the sequence is VGSLLQALQQRMEKYKSAAQQAKSSGDD. 2 disordered regions span residues 441 to 463 and 478 to 502; these read AELP…EEGS and AGED…PTQL. A compositionally biased stretch (pro residues) spans 444–453; the sequence is PVPPGFPPLP. Coiled coils occupy residues 464 to 488 and 535 to 564; these read VEKA…DEDE and PAVQ…KNDL. The C2 domain maps to 685-820; it reads HFEDKTLKIV…ETQCEIREIV (136 aa).

It belongs to the CC2D1 family.

The sequence is that of Coiled-coil and C2 domain-containing protein 1B (cc2d1b) from Xenopus laevis (African clawed frog).